We begin with the raw amino-acid sequence, 112 residues long: MAESFTTTNRYFDNKHYPRGFSRHGDFTIKEAQLLERHGHAFNDLDLGKREPVTEEEKLFVAVCRGEREPVTDAERVWSKYMTRIKRPKRFHTLSGGKPQVEGAEDYTEADD.

The disordered stretch occupies residues 91–112 (FHTLSGGKPQVEGAEDYTEADD). A compositionally biased stretch (acidic residues) spans 103-112 (GAEDYTEADD).

The protein belongs to the MaoP family.

Its function is as follows. Involved in the organization of the Ori region of the chromosome into a macrodomain (MD). It constrains DNA mobility in the Ori macrodomain and limits long-distance DNA interactions with other chromosomal regions. The sequence is that of Macrodomain Ori protein from Salmonella choleraesuis (strain SC-B67).